Here is a 122-residue protein sequence, read N- to C-terminus: Large ribosomal subunit protein uL14 (122 aa).

This sequence belongs to the universal ribosomal protein uL14 family. As to quaternary structure, part of the 50S ribosomal subunit. Forms a cluster with proteins L3 and L19. In the 70S ribosome, L14 and L19 interact and together make contacts with the 16S rRNA in bridges B5 and B8.

In terms of biological role, binds to 23S rRNA. Forms part of two intersubunit bridges in the 70S ribosome. This chain is Large ribosomal subunit protein uL14, found in Mycoplasma mobile (strain ATCC 43663 / 163K / NCTC 11711) (Mesomycoplasma mobile).